Consider the following 855-residue polypeptide: MICAL-like protein 1 (855 aa).

The Calponin-homology (CH) domain occupies 2–108 (AGPRGALLAW…YVSQYYNHFT (107 aa)). Disordered regions lie at residues 110–165 (SGQA…SSAC), 226–253 (GRSG…EDSD), and 269–659 (QASS…HGFP). Residues 124–135 (PAAPSPTSTSPA) show a composition bias toward low complexity. Positions 163–226 (SACAACGQRV…ERCTRLGLGG (64 aa)) constitute an LIM zinc-binding domain. The span at 269–278 (QASSEVQPHT) shows a compositional bias: polar residues. Ser293 and Ser307 each carry phosphoserine. Positions 308-325 (ESSALTPPTPRPRSSLQQ) are enriched in polar residues. 2 positions are modified to phosphothreonine: Thr313 and Thr316. The segment covering 356-367 (LSERMTAPRKDP) has biased composition (basic and acidic residues). The short motif at 423–425 (NPF) is the NPF1 element. Acidic residues predominate over residues 425–434 (FEEEEEEEEA). Pro residues predominate over residues 439 to 449 (VPSPAPAPPET). 2 positions are modified to phosphothreonine: Thr461 and Thr463. Ser464, Ser465, Ser478, and Ser480 each carry phosphoserine. The span at 499–514 (PSPALSVESLSSESSS) shows a compositional bias: low complexity. Polar residues predominate over residues 542-554 (PGTSANSVTPSAH). Residues 555–570 (SSLSSSGELGQPSGEQ) show a composition bias toward low complexity. Residue Ser613 is modified to Phosphoserine. Positions 625 to 627 (NPF) match the NPF2 motif. The segment at 644-855 (KGAKPVRPPA…AKSKAPTGKS (212 aa)) is mediates the interaction with RAB13 and intramolecular interaction with the calponin-homology (CH) domain. The region spanning 663–810 (RKVQADQYIP…EEEEDKMLET (148 aa)) is the bMERB domain. Residues 679-703 (EMDSIERQLDALEHSGVLLEEKLRG) adopt a coiled-coil conformation. 2 positions are modified to phosphoserine: Ser682 and Ser732. Residues 692–855 (HSGVLLEEKL…AKSKAPTGKS (164 aa)) are necessary and sufficient to associate with tubular recycling endosome membranes, mediate phosphatidic acid-binding and membrane tubulation. A coiled-coil region spans residues 794–822 (LDEDRQREEEEDKMLETMIKKKDFQREAE). Residues 815–826 (KDFQREAESDSK) are compositionally biased toward basic and acidic residues. Positions 815–855 (KDFQREAESDSKKKGKFKTMKVLKLLGNKRDAKSKAPTGKS) are disordered.

Homooligomer. Interacts (via NPF1 motif) with EHD1 (via EH domain); the interaction is direct and probably recruits EHD1 to membranes. Interacts with EHD3 (via EH domain). Interacts with RAB35 (GTP-bound form); the interaction is direct and probably recruits MICALL1 to membranes. Interacts with ACAP2; the interaction is indirect through RAB35. Interacts with RAB8A (GTP-bound form); regulates RAB8A association with recycling endosomes. Interacts with RAB13 (GTP-bound form). Interacts with ARF6 (GTP-bound form). Interacts with PACSIN2 (via the SH3 domain). Interacts with DPYSL2.

Its subcellular location is the recycling endosome membrane. It localises to the late endosome membrane. It is found in the cell projection. The protein resides in the cilium membrane. The protein localises to the cytoplasm. Its subcellular location is the cytoskeleton. It localises to the microtubule organizing center. It is found in the centrosome. The protein resides in the centriole. Its function is as follows. Lipid-binding protein with higher affinity for phosphatidic acid, a lipid enriched in recycling endosome membranes. On endosome membranes, acts as a downstream effector of Rab proteins recruiting cytosolic proteins to regulate membrane tubulation. Involved in a late step of receptor-mediated endocytosis regulating for instance endocytosed-EGF receptor trafficking. Alternatively, regulates slow endocytic recycling of endocytosed proteins back to the plasma membrane. Also involved in cargo protein delivery to the plasma membrane. Plays a role in ciliogenesis coordination, recruits EHD1 to primary cilium where it is anchored to the centriole through interaction with tubulins. May indirectly play a role in neurite outgrowth. This chain is MICAL-like protein 1 (Micall1), found in Rattus norvegicus (Rat).